A 182-amino-acid chain; its full sequence is MNENIAKSISKFLSLVLRHSPEKIGLKLDENGWADVNELIEKCTKKGNRLDAELLDYVVENNDKKRFAYNEDKTKIRASQGHSISVELNLAETEPLEYLYHGTVGKFMESIQKEGLKKMSRQHVHLSKDKETAVKVGSRRGVPQILTVRSGAMYRDGFKFYLSENNVWLTDEVPPKYIEFKS.

This sequence belongs to the KptA/TPT1 family.

Its function is as follows. Removes the 2'-phosphate from RNA via an intermediate in which the phosphate is ADP-ribosylated by NAD followed by a presumed transesterification to release the RNA and generate ADP-ribose 1''-2''-cyclic phosphate (APPR&gt;P). May function as an ADP-ribosylase. This is Probable RNA 2'-phosphotransferase from Flavobacterium johnsoniae (strain ATCC 17061 / DSM 2064 / JCM 8514 / BCRC 14874 / CCUG 350202 / NBRC 14942 / NCIMB 11054 / UW101) (Cytophaga johnsonae).